Reading from the N-terminus, the 953-residue chain is Translation initiation factor IF-2 (953 aa).

2 disordered regions span residues 51 to 242 (SKAS…QEAK) and 279 to 363 (TKLK…TERK). Basic and acidic residues-rich tracts occupy residues 80–89 (TGSEHVEKTQ) and 98–111 (FKAE…EQAA). Positions 131 to 140 (QPNNHQTNEQ) are enriched in polar residues. A compositionally biased stretch (basic and acidic residues) spans 149-188 (SQGDTNDKRIERKASNVSPRHDNHQLVGDRNRSFAKENHK). Residues 191-207 (RFTNQKKQGRQEPQSKS) show a composition bias toward polar residues. Positions 229–242 (RQSETRFRAQQEAK) are enriched in basic and acidic residues. The segment covering 282–291 (KSSNISAKST) has biased composition (polar residues). Basic and acidic residues predominate over residues 300 to 317 (ARPEKNRELTHHSQEGQK). Low complexity predominate over residues 322-338 (SWNSQNQVRNQKNSNWN). The span at 339-348 (KNKKTKKGKN) shows a compositional bias: basic residues. A tr-type G domain is found at 454–623 (ERAPVVTIMG…LLVAEVEELK (170 aa)). The tract at residues 463–470 (GHVDHGKT) is G1. 463–470 (GHVDHGKT) lines the GTP pocket. The interval 488–492 (GITQH) is G2. The segment at 509–512 (DTPG) is G3. Residues 509–513 (DTPGH) and 563–566 (NKID) contribute to the GTP site. The segment at 563 to 566 (NKID) is G4. Residues 599–601 (SAK) form a G5 region.

It belongs to the TRAFAC class translation factor GTPase superfamily. Classic translation factor GTPase family. IF-2 subfamily.

Its subcellular location is the cytoplasm. Functionally, one of the essential components for the initiation of protein synthesis. Protects formylmethionyl-tRNA from spontaneous hydrolysis and promotes its binding to the 30S ribosomal subunits. Also involved in the hydrolysis of GTP during the formation of the 70S ribosomal complex. In Streptococcus pyogenes serotype M49 (strain NZ131), this protein is Translation initiation factor IF-2.